Reading from the N-terminus, the 349-residue chain is MVRAKRKLDHIEYALSTGQSRTHGFHDIDFVHQSLPNSSYETITCETKIGELSLSSPIFINAMTGGGGEKTLHINEQLAYVAKHHNLAMAVGSQMAALKDESEAASYKIIRKVNPNGIFFANLGSEATVEQAELAVDMIEANALQIHLNVIQELTMPEGDRDFTGVLQRIEKIVLNSKVPVIVKEVGFGMSKETMQQLASVGVTAIDIGGQGGTNFAAVENERRQRMLSYFNNWGIQTATSIIEATSTNNNLSFIASGGIQTALDVAKAIALGANTTAFAGYFLRILMEDGIEKLVDEIDLLHTDLKFIMTALGAKTIEELQSVPLVVKGETYHWLTQRGIDTTHYSRR.

R6–K7 is a binding site for substrate. FMN contacts are provided by residues A62 to T64, S93, and N122. Q152 provides a ligand contact to substrate. E153 is a Mg(2+) binding site. FMN is bound by residues K184, T214, G258–G259, and A280–G281.

Belongs to the IPP isomerase type 2 family. Homooctamer. Dimer of tetramers. FMN serves as cofactor. The cofactor is NADPH. Requires Mg(2+) as cofactor.

The protein resides in the cytoplasm. The catalysed reaction is isopentenyl diphosphate = dimethylallyl diphosphate. In terms of biological role, involved in the biosynthesis of isoprenoids. Catalyzes the 1,3-allylic rearrangement of the homoallylic substrate isopentenyl (IPP) to its allylic isomer, dimethylallyl diphosphate (DMAPP). This is Isopentenyl-diphosphate delta-isomerase from Bacillus cereus (strain 03BB102).